A 172-amino-acid chain; its full sequence is RNA silencing suppressor p19 (172 aa).

Composition is skewed to basic and acidic residues over residues 1 to 14 (MERA…REQA) and 150 to 172 (SERE…EESE). Disordered regions lie at residues 1–34 (MERA…KLPD) and 145–172 (LQPT…EESE).

Belongs to the tombusvirus protein p19 family. Homodimer.

Viral suppressor of RNA silencing which binds specifically to silencing RNAs (siRNAs). Acts as a molecular caliper to specifically select siRNAs based on the length of the duplex region of the RNA. The protein is RNA silencing suppressor p19 of Cymbidium ringspot virus (CymRSV).